We begin with the raw amino-acid sequence, 147 residues long: Large ribosomal subunit protein uL15 (147 aa).

The disordered stretch occupies residues 1-45 (MRLEDLRPTPGAMKKRKRVGRGPGSGHGKTSGRGHKGQKARGSGK). Residues 30 to 44 (TSGRGHKGQKARGSG) are compositionally biased toward basic residues.

This sequence belongs to the universal ribosomal protein uL15 family. In terms of assembly, part of the 50S ribosomal subunit.

Its function is as follows. Binds to the 23S rRNA. The protein is Large ribosomal subunit protein uL15 of Thermotoga sp. (strain RQ2).